The chain runs to 284 residues: RNase adapter protein RapZ (284 aa).

8–15 serves as a coordination point for ATP; it reads GRSGSGKS. 56-59 is a binding site for GTP; sequence DVRN. Positions 266-284 are RNA-binding; that stretch reads RSRGKNVQSRHRTLEKRKS.

It belongs to the RapZ-like family. RapZ subfamily. In terms of assembly, homotrimer.

Its function is as follows. Modulates the synthesis of GlmS, by affecting the processing and stability of the regulatory small RNA GlmZ. When glucosamine-6-phosphate (GlcN6P) concentrations are high in the cell, RapZ binds GlmZ and targets it to cleavage by RNase E. Consequently, GlmZ is inactivated and unable to activate GlmS synthesis. Under low GlcN6P concentrations, RapZ is sequestered and inactivated by an other regulatory small RNA, GlmY, preventing GlmZ degradation and leading to synthesis of GlmS. This Klebsiella pneumoniae (strain 342) protein is RNase adapter protein RapZ.